Here is a 48-residue protein sequence, read N- to C-terminus: Large ribosomal subunit protein bL32 (48 aa).

The tract at residues 1-20 is disordered; it reads MAVPDRRVSKTRAAKRRTHY. Basic residues predominate over residues 9–20; it reads SKTRAAKRRTHY.

This sequence belongs to the bacterial ribosomal protein bL32 family.

The polypeptide is Large ribosomal subunit protein bL32 (Helicobacter acinonychis (strain Sheeba)).